The chain runs to 398 residues: Succinyl-diaminopimelate desuccinylase (398 aa).

His68 is a binding site for Zn(2+). Asp70 is an active-site residue. Residue Asp101 coordinates Zn(2+). Glu135 functions as the Proton acceptor in the catalytic mechanism. Positions 136, 164, and 349 each coordinate Zn(2+).

Belongs to the peptidase M20A family. DapE subfamily. Homodimer. Zn(2+) serves as cofactor. Requires Co(2+) as cofactor.

The catalysed reaction is N-succinyl-(2S,6S)-2,6-diaminopimelate + H2O = (2S,6S)-2,6-diaminopimelate + succinate. Its pathway is amino-acid biosynthesis; L-lysine biosynthesis via DAP pathway; LL-2,6-diaminopimelate from (S)-tetrahydrodipicolinate (succinylase route): step 3/3. Catalyzes the hydrolysis of N-succinyl-L,L-diaminopimelic acid (SDAP), forming succinate and LL-2,6-diaminopimelate (DAP), an intermediate involved in the bacterial biosynthesis of lysine and meso-diaminopimelic acid, an essential component of bacterial cell walls. The polypeptide is Succinyl-diaminopimelate desuccinylase (Wolbachia pipientis subsp. Culex pipiens (strain wPip)).